The following is a 131-amino-acid chain: Small ribosomal subunit protein uS8 (131 aa).

It belongs to the universal ribosomal protein uS8 family. As to quaternary structure, part of the 30S ribosomal subunit. Contacts proteins S5 and S12.

Functionally, one of the primary rRNA binding proteins, it binds directly to 16S rRNA central domain where it helps coordinate assembly of the platform of the 30S subunit. This chain is Small ribosomal subunit protein uS8, found in Thermodesulfovibrio yellowstonii (strain ATCC 51303 / DSM 11347 / YP87).